The primary structure comprises 578 residues: MNSFMSLVRTATIALLLIAFLQNANAVKNLQSIVAYHGAVATDDGRCSAIGTNVLRQGGNAIDASVAAALCLGVVSPASSGIGGGAFTMIKLANGTEVAYDSRETAPLSATEDMYGDNPERKKKGSLSVGVPGEVAGLYTAWTQHGKLPWKQLVEPAEKLAAEGFKISKYLYMQMNATRSDILADKGLSELFVSNGELKKPGAICRNPKLADTLSQIAEYGPKAFYNGTVGFNLVSDIQKAGGIITLKDLQNYNVKVKEPLSTEILGYRLLGMPPPSSGGPAMMLILNILAQYGIPSGVSGPLGVHRLVEALKHAFAVRMNLGDPDFVPEVTNVVADMLSPKFAQDLKSKINDEKTFDPKYYGGKWGQIKDHGTSHLSIIDSERNAVSMTSTINGYFGAIMLSPSTGIVLNNEMDDFSIPTKSGGDPDVPPPAPANFIRPGKRPLSSMTPTIVLKDGKVKAALGASGGMYIIAGTTQVYLNHFFLNMDPLSSVVAPRIYHQLIPNKASYENWTTVYSDHFEIPEEIRLVLEKKGQVLTPIAGGTISQLIVEQSDGKSGGISKLVAVSDPRKGGFPSGY.

The signal sequence occupies residues 1-26; sequence MNSFMSLVRTATIALLLIAFLQNANA. An N-linked (GlcNAc...) asparagine glycan is attached at N94. R103 is a binding site for L-glutamate. 2 N-linked (GlcNAc...) asparagine glycosylation sites follow: N176 and N227. T374 (nucleophile) is an active-site residue. L-glutamate is bound by residues T392, N394, E413, D416, 446-447, and 467-468; these read SS and GG. A glycan (N-linked (GlcNAc...) asparagine) is linked at N511.

Belongs to the gamma-glutamyltransferase family. As to expression, expressed in roots, immature trichomes and pollen. In developing siliques, specifically expressed in the embryo, endosperm, outer integument and a small portion of the funiculus.

It localises to the secreted. The protein localises to the extracellular space. It is found in the apoplast. It carries out the reaction an N-terminal (5-L-glutamyl)-[peptide] + an alpha-amino acid = 5-L-glutamyl amino acid + an N-terminal L-alpha-aminoacyl-[peptide]. The enzyme catalyses glutathione + H2O = L-cysteinylglycine + L-glutamate. The catalysed reaction is an S-substituted glutathione + H2O = an S-substituted L-cysteinylglycine + L-glutamate. It participates in sulfur metabolism; glutathione metabolism. May be required for glutathione transport into developing seeds. The chain is Glutathione hydrolase 2 (GGT2) from Arabidopsis thaliana (Mouse-ear cress).